The following is a 148-amino-acid chain: UPF0208 membrane protein HD_1715 (148 aa).

The next 2 helical transmembrane spans lie at 41 to 60 and 66 to 88; these read AARFMPIFACFAILWQYFFT and ILANAIITSLFAISLPYQGLYWL.

The protein belongs to the UPF0208 family.

The protein resides in the cell inner membrane. The sequence is that of UPF0208 membrane protein HD_1715 from Haemophilus ducreyi (strain 35000HP / ATCC 700724).